We begin with the raw amino-acid sequence, 259 residues long: Dickkopf-related protein 2 (259 aa).

A signal peptide spans 1-33 (MAALMRVKDSSRCLLLLAAVLMVESSQLGSSRA). The tract at residues 42–70 (LGGETPAQSANRSAGMNQGLAFGGSKKGK) is disordered. The segment covering 47 to 57 (PAQSANRSAGM) has biased composition (polar residues). The N-linked (GlcNAc...) asparagine glycan is linked to N52. The tract at residues 78–127 (CSSDKECEVGRYCHSPHQGSSACMLCRRKKKRCHRDGMCCPGTRCNNGIC) is DKK-type Cys-1. 5 disulfides stabilise this stretch: C183/C195, C189/C204, C194/C231, C214/C239, and C233/C256. The segment at 183-256 (CLRSSDCIDG…YSSKARLHVC (74 aa)) is DKK-type Cys-2.

This sequence belongs to the dickkopf family. As to quaternary structure, interacts with LRP5 and LRP6. May be proteolytically processed by a furin-like protease.

Its subcellular location is the secreted. Its function is as follows. Antagonizes canonical Wnt signaling by inhibiting LRP5/6 interaction with Wnt and by forming a ternary complex with the transmembrane protein KREMEN that promotes internalization of LRP5/6. DKKs play an important role in vertebrate development, where they locally inhibit Wnt regulated processes such as antero-posterior axial patterning, limb development, somitogenesis and eye formation. In the adult, Dkks are implicated in bone formation and bone disease, cancer and Alzheimer disease. This Mus musculus (Mouse) protein is Dickkopf-related protein 2.